The following is a 426-amino-acid chain: Chaperone SurA (426 aa).

Residues 1–13 form the signal peptide; that stretch reads MLGALFLGTAANA. PpiC domains are found at residues 164 to 265 and 274 to 373; these read SEEL…KLLE and RDEV…EVLG.

Its subcellular location is the periplasm. It catalyses the reaction [protein]-peptidylproline (omega=180) = [protein]-peptidylproline (omega=0). In terms of biological role, chaperone involved in the correct folding and assembly of outer membrane proteins. Recognizes specific patterns of aromatic residues and the orientation of their side chains, which are found more frequently in integral outer membrane proteins. May act in both early periplasmic and late outer membrane-associated steps of protein maturation. The polypeptide is Chaperone SurA (Pseudomonas fluorescens (strain Pf0-1)).